Reading from the N-terminus, the 652-residue chain is Acetyl-coenzyme A synthetase (652 aa).

Residues 191–194, Thr-311, and Asn-335 contribute to the CoA site; that span reads RAGR. Residues 387–389, 411–416, Asp-500, and Arg-515 each bind ATP; these read GEP and DTWWQT. Ser-523 contributes to the CoA binding site. ATP is bound at residue Arg-526. Mg(2+) is bound by residues Val-537, His-539, and Ile-542. Arg-584 contributes to the CoA binding site. Lys-609 is subject to N6-acetyllysine.

This sequence belongs to the ATP-dependent AMP-binding enzyme family. Mg(2+) is required as a cofactor. In terms of processing, acetylated. Deacetylation by the SIR2-homolog deacetylase activates the enzyme.

The catalysed reaction is acetate + ATP + CoA = acetyl-CoA + AMP + diphosphate. In terms of biological role, catalyzes the conversion of acetate into acetyl-CoA (AcCoA), an essential intermediate at the junction of anabolic and catabolic pathways. Acs undergoes a two-step reaction. In the first half reaction, Acs combines acetate with ATP to form acetyl-adenylate (AcAMP) intermediate. In the second half reaction, it can then transfer the acetyl group from AcAMP to the sulfhydryl group of CoA, forming the product AcCoA. Its function is as follows. Enables the cell to use acetate during aerobic growth to generate energy via the TCA cycle, and biosynthetic compounds via the glyoxylate shunt. Acetylates CheY, the response regulator involved in flagellar movement and chemotaxis. This is Acetyl-coenzyme A synthetase from Escherichia coli O157:H7.